A 358-amino-acid chain; its full sequence is Serine/threonine-protein phosphatase 2A activator 2 (358 aa).

Belongs to the PTPA-type PPIase family.

Its subcellular location is the cytoplasm. It carries out the reaction [protein]-peptidylproline (omega=180) = [protein]-peptidylproline (omega=0). Its function is as follows. PPIases accelerate the folding of proteins. It catalyzes the cis-trans isomerization of proline imidic peptide bonds in oligopeptides. Acts as a regulatory subunit for PP2A-like phosphatases modulating their activity or substrate specificity, probably by inducing a conformational change in the catalytic subunit, a direct target of the PPIase. Can reactivate inactive phosphatase PP2A-phosphatase methylesterase complexes (PP2Ai) in presence of ATP and Mg(2+) by dissociating the inactive form from the complex. The protein is Serine/threonine-protein phosphatase 2A activator 2 (RRD2) of Candida glabrata (strain ATCC 2001 / BCRC 20586 / JCM 3761 / NBRC 0622 / NRRL Y-65 / CBS 138) (Yeast).